The primary structure comprises 299 residues: Taste receptor type 2 member 4 (299 aa).

The Extracellular portion of the chain corresponds to 1–9; sequence MLQLFYFSA. A helical membrane pass occupies residues 10-30; the sequence is IIASVILNFVGIIMNLFIMVV. Residues 31-46 are Cytoplasmic-facing; that stretch reads NCKTWVKSHRISSSDR. A helical membrane pass occupies residues 47 to 67; sequence ILFSLGITRFLMLGLFLVNTI. Residues 68-81 are Extracellular-facing; the sequence is FFVSSNTERSVYLS. Residues 82–102 traverse the membrane as a helical segment; sequence AFFVLCFMFXDSSSLWFVTLL. At 103 to 131 the chain is on the cytoplasmic side; that stretch reads NILYCVKITNFQHSVFLLLKQNISPKIPR. Residues 132–152 traverse the membrane as a helical segment; it reads LLLACVLISAFTTCLYITLSQ. Residues 153 to 172 are Extracellular-facing; it reads ASPFPELVTKRNNTSFNTHE. N-linked (GlcNAc...) asparagine glycosylation is found at asparagine 164 and asparagine 165. The helical transmembrane segment at 173–193 threads the bilayer; it reads GILSLVVSLVLSSSLQFIINV. At 194 to 230 the chain is on the cytoplasmic side; sequence TSASLLIHSLRRHIQKMQKNATGFWNPQTEAHVGAMK. Residues 231-251 traverse the membrane as a helical segment; sequence LMIYFLILYIPYSVATLVQYL. At 252 to 262 the chain is on the extracellular side; it reads PFYVGMDMGTK. The helical transmembrane segment at 263-283 threads the bilayer; it reads AICLIFATLYSPGHSVLIIIT. Residues 284-299 are Cytoplasmic-facing; that stretch reads HPKLKTTAKKILCFKK.

It belongs to the G-protein coupled receptor T2R family.

Its subcellular location is the membrane. The protein localises to the cell projection. The protein resides in the cilium membrane. Gustducin-coupled receptor implicated in the perception of bitter compounds in the oral cavity and the gastrointestinal tract. Signals through PLCB2 and the calcium-regulated cation channel TRPM5. In airway epithelial cells, binding of denatonium increases the intracellular calcium ion concentration and stimulates ciliary beat frequency. The protein is Taste receptor type 2 member 4 (TAS2R4) of Pongo pygmaeus (Bornean orangutan).